The following is a 176-amino-acid chain: 3-hydroxydecanoyl-[acyl-carrier-protein] dehydratase (176 aa).

Histidine 71 is a catalytic residue.

Belongs to the thioester dehydratase family. FabA subfamily. As to quaternary structure, homodimer.

The protein resides in the cytoplasm. It catalyses the reaction a (3R)-hydroxyacyl-[ACP] = a (2E)-enoyl-[ACP] + H2O. It carries out the reaction (3R)-hydroxydecanoyl-[ACP] = (2E)-decenoyl-[ACP] + H2O. The catalysed reaction is (2E)-decenoyl-[ACP] = (3Z)-decenoyl-[ACP]. Its pathway is lipid metabolism; fatty acid biosynthesis. Functionally, necessary for the introduction of cis unsaturation into fatty acids. Catalyzes the dehydration of (3R)-3-hydroxydecanoyl-ACP to E-(2)-decenoyl-ACP and then its isomerization to Z-(3)-decenoyl-ACP. Can catalyze the dehydratase reaction for beta-hydroxyacyl-ACPs with saturated chain lengths up to 16:0, being most active on intermediate chain length. This Rhodopseudomonas palustris (strain BisA53) protein is 3-hydroxydecanoyl-[acyl-carrier-protein] dehydratase.